The sequence spans 486 residues: MFEQSISTLAQKLRNKDISSVELTRLFLARIAKLDPQLNSFITVSEQHALEQAAAADVLLQSGKGTSLTGIPVAHKDLFCTEGTLTTCGSKMLHNFVPPYESTVTSRIQQAGAVMLGKTNMDEFAMGSSNENSFYGAVKNPWNLDMVPGGSSGGSAAAIAAGLAVAATGTDTGGSIRQPASFCGITGLKPTYGRVSRFGMIAYASSLDQGGPMAKSAEDCAHLMQAMAGFDEKDSTSADKPADDYLANLNSPLTGLKIGLPKEYFGEGLDSKVADVIMAAVKEFEKLGATVKEISLPNLQLSIPSYYVIAPSEASSNLSRFDGVRFGHRCDDPKDLLDMYTRSRAEGFGTEVQKRIMVGTYALSEGYYDAYYLKAQKIRRLIKEDFVKALEEVDVIMGPVAPTTAFGLGSKTSDPVAMYLEDIYTLSVNLAGIPAMSVPAGFADGMPVGLQVMGNYFAEAKLLNIAHQYQQHTDWHLQTPTMAKGA.

Catalysis depends on charge relay system residues Lys76 and Ser151. Catalysis depends on Ser175, which acts as the Acyl-ester intermediate.

Belongs to the amidase family. GatA subfamily. As to quaternary structure, heterotrimer of A, B and C subunits.

It catalyses the reaction L-glutamyl-tRNA(Gln) + L-glutamine + ATP + H2O = L-glutaminyl-tRNA(Gln) + L-glutamate + ADP + phosphate + H(+). Allows the formation of correctly charged Gln-tRNA(Gln) through the transamidation of misacylated Glu-tRNA(Gln) in organisms which lack glutaminyl-tRNA synthetase. The reaction takes place in the presence of glutamine and ATP through an activated gamma-phospho-Glu-tRNA(Gln). This chain is Glutamyl-tRNA(Gln) amidotransferase subunit A, found in Marinomonas sp. (strain MWYL1).